A 100-amino-acid chain; its full sequence is Putative pterin-4-alpha-carbinolamine dehydratase (100 aa).

Belongs to the pterin-4-alpha-carbinolamine dehydratase family.

It catalyses the reaction (4aS,6R)-4a-hydroxy-L-erythro-5,6,7,8-tetrahydrobiopterin = (6R)-L-erythro-6,7-dihydrobiopterin + H2O. The chain is Putative pterin-4-alpha-carbinolamine dehydratase from Bradyrhizobium sp. (strain ORS 278).